The primary structure comprises 275 residues: 2'-N-acetylparomamine deacetylase (275 aa).

Histidine 14, aspartate 17, and histidine 166 together coordinate Zn(2+).

It belongs to the PIGL family. Zn(2+) serves as cofactor.

It carries out the reaction 2'-N-acetylparomamine + H2O = paromamine + acetate. The protein operates within antibiotic biosynthesis; butirosin biosynthesis. Its function is as follows. Deacetylase involved in the biosynthesis of butirosin by mediating deacetylation of 2'-N-acetylparomamine. In Niallia circulans (Bacillus circulans), this protein is 2'-N-acetylparomamine deacetylase (btrD).